The following is a 194-amino-acid chain: Ion-translocating oxidoreductase complex subunit B (194 aa).

Positions 1-26 (MSSILIAVIAIAALALVFGLILGFAS) are hydrophobic. The 4Fe-4S domain occupies 32–90 (ESDPIVEQIDAILPQTQCGQCGYPGCKPYAEAIANGDMINKCPPGGQATIEKLADLMGV). C49, C52, C57, C73, C114, C117, C120, C124, C144, C147, C150, and C154 together coordinate [4Fe-4S] cluster. 4Fe-4S ferredoxin-type domains are found at residues 105-134 (KVAFIHEDMCIGCTKCIQACPVDAIVGGTK) and 135-164 (ALHTVIESECTGCDLCVAPCPTDCIEMIPV).

The protein belongs to the 4Fe4S bacterial-type ferredoxin family. RnfB subfamily. The complex is composed of six subunits: RnfA, RnfB, RnfC, RnfD, RnfE and RnfG. The cofactor is [4Fe-4S] cluster.

The protein resides in the cell inner membrane. Part of a membrane-bound complex that couples electron transfer with translocation of ions across the membrane. The chain is Ion-translocating oxidoreductase complex subunit B from Aliivibrio fischeri (strain ATCC 700601 / ES114) (Vibrio fischeri).